Here is a 480-residue protein sequence, read N- to C-terminus: Aspartyl/glutamyl-tRNA(Asn/Gln) amidotransferase subunit B (480 aa).

The protein belongs to the GatB/GatE family. GatB subfamily. In terms of assembly, heterotrimer of A, B and C subunits.

The catalysed reaction is L-glutamyl-tRNA(Gln) + L-glutamine + ATP + H2O = L-glutaminyl-tRNA(Gln) + L-glutamate + ADP + phosphate + H(+). It carries out the reaction L-aspartyl-tRNA(Asn) + L-glutamine + ATP + H2O = L-asparaginyl-tRNA(Asn) + L-glutamate + ADP + phosphate + 2 H(+). Its function is as follows. Allows the formation of correctly charged Asn-tRNA(Asn) or Gln-tRNA(Gln) through the transamidation of misacylated Asp-tRNA(Asn) or Glu-tRNA(Gln) in organisms which lack either or both of asparaginyl-tRNA or glutaminyl-tRNA synthetases. The reaction takes place in the presence of glutamine and ATP through an activated phospho-Asp-tRNA(Asn) or phospho-Glu-tRNA(Gln). This is Aspartyl/glutamyl-tRNA(Asn/Gln) amidotransferase subunit B from Streptococcus agalactiae serotype III (strain NEM316).